The following is a 143-amino-acid chain: MFDFDATLPVMALQFILLAVILNAVFYKPLSKVLDERAEYIRQTESGAKEQLAKTEALVQEYELQLSSARKQSQEIIAQAQAEAQKLASERVAAAQKEAIARKEAVAAEIAQQKEEAFRSLEGQVASLSRQILEKLLGPELVR.

A helical membrane pass occupies residues 6–26; the sequence is ATLPVMALQFILLAVILNAVF.

Belongs to the ATPase B chain family. As to quaternary structure, F-type ATPases have 2 components, F(1) - the catalytic core - and F(0) - the membrane proton channel. F(1) has five subunits: alpha(3), beta(3), gamma(1), delta(1), epsilon(1). F(0) has four main subunits: a(1), b(1), b'(1) and c(10-14). The alpha and beta chains form an alternating ring which encloses part of the gamma chain. F(1) is attached to F(0) by a central stalk formed by the gamma and epsilon chains, while a peripheral stalk is formed by the delta, b and b' chains.

The protein localises to the cellular thylakoid membrane. Its function is as follows. F(1)F(0) ATP synthase produces ATP from ADP in the presence of a proton or sodium gradient. F-type ATPases consist of two structural domains, F(1) containing the extramembraneous catalytic core and F(0) containing the membrane proton channel, linked together by a central stalk and a peripheral stalk. During catalysis, ATP synthesis in the catalytic domain of F(1) is coupled via a rotary mechanism of the central stalk subunits to proton translocation. Functionally, component of the F(0) channel, it forms part of the peripheral stalk, linking F(1) to F(0). The b'-subunit is a diverged and duplicated form of b found in plants and photosynthetic bacteria. The chain is ATP synthase subunit b' from Microcystis aeruginosa (strain NIES-843 / IAM M-2473).